We begin with the raw amino-acid sequence, 341 residues long: Pre-mRNA-processing protein 45 (341 aa).

Disordered regions lie at residues 1 to 31 (MFSSLLPKPKYSSHEPTSRIKLKKVRAHEKS), 181 to 226 (NYQE…EDQA), and 302 to 341 (EQHEKENKLKELADIARSKKLNNKRPPNGDYDDVKKKTKY). Over residues 192-201 (FKLRKNRHKN) the composition is skewed to basic residues. Over residues 302–318 (EQHEKENKLKELADIAR) the composition is skewed to basic and acidic residues.

It belongs to the SNW family. As to quaternary structure, associated with the spliceosome.

The protein localises to the nucleus. Functionally, involved in pre-mRNA splicing. The sequence is that of Pre-mRNA-processing protein 45 (PRP45) from Debaryomyces hansenii (strain ATCC 36239 / CBS 767 / BCRC 21394 / JCM 1990 / NBRC 0083 / IGC 2968) (Yeast).